Reading from the N-terminus, the 275-residue chain is Small ribosomal subunit protein uS2 (275 aa).

The interval Ala-226–Glu-275 is disordered. Residues Ala-264 to Glu-275 are compositionally biased toward low complexity.

This sequence belongs to the universal ribosomal protein uS2 family.

The polypeptide is Small ribosomal subunit protein uS2 (Xanthomonas campestris pv. campestris (strain ATCC 33913 / DSM 3586 / NCPPB 528 / LMG 568 / P 25)).